The following is a 254-amino-acid chain: MTGLSSPGDALLRFEPLTEGVLLKRYKRFLADVELSSGETVTAHCANTGPMTGVLIPGQRVRLRYAPSPKRKLAWTWEQAEVPGADGQHCWVGINTALPNRLIRATVEAGCLEAQLGAIARIRAEVAYGTNKRSRIDLLLTPAEQNPDQRPIYLEVKNTTWTDGSTALFPDTVTERGQKHLIELMGVLPDARAVLVPCLSRPDVTAFAPGDSADPRYGELFRQATNSGVEVLPCCFSFSADAVHWQGTRLVDLG.

Belongs to the SfsA family.

The chain is Sugar fermentation stimulation protein homolog from Synechococcus sp. (strain CC9605).